Reading from the N-terminus, the 253-residue chain is uncharacterized protein (253 aa).

The protein belongs to the herpesviridae BTRF1 family.

This is an uncharacterized protein from Saimiriine herpesvirus 2 (strain 11) (SaHV-2).